Consider the following 297-residue polypeptide: ATP phosphoribosyltransferase (297 aa).

M1 carries the N-acetylmethionine modification.

It belongs to the ATP phosphoribosyltransferase family.

The protein resides in the cytoplasm. The catalysed reaction is 1-(5-phospho-beta-D-ribosyl)-ATP + diphosphate = 5-phospho-alpha-D-ribose 1-diphosphate + ATP. It participates in amino-acid biosynthesis; L-histidine biosynthesis; L-histidine from 5-phospho-alpha-D-ribose 1-diphosphate: step 1/9. Its function is as follows. Catalyzes the condensation of ATP and 5-phosphoribose 1-diphosphate to form N'-(5'-phosphoribosyl)-ATP (PR-ATP). Has a crucial role in the pathway because the rate of histidine biosynthesis seems to be controlled primarily by regulation of the enzymatic activity. The sequence is that of ATP phosphoribosyltransferase (HIS1) from Saccharomyces cerevisiae (strain ATCC 204508 / S288c) (Baker's yeast).